We begin with the raw amino-acid sequence, 189 residues long: Class A basic helix-loop-helix protein 15 (189 aa).

Residues 1 to 12 (MKTKNRPPRRRA) are compositionally biased toward basic residues. Disordered regions lie at residues 1-85 (MKTK…ERER) and 167-189 (TEAQ…REGT). Thr25 bears the Phosphothreonine mark. Residues 68–85 (GRRDSSIQRRLESNERER) are compositionally biased toward basic and acidic residues. The 53-residue stretch at 75–127 (QRRLESNERERQRMHKLNNAFQALREVIPHVRADKKLSKIETLTLAKNYIKSL) folds into the bHLH domain.

Forms homodimers or heterodimers with TCF3 gene products E12 and E47. These dimers bind to the E-box site, however, heterodimer with MYOD1 does not bind target DNA. In terms of tissue distribution, expressed in brain, liver, spleen and skeletal muscle.

The protein resides in the nucleus. Functionally, plays a role in controlling the transcriptional activity of MYOD1, ensuring that expanding myoblast populations remain undifferentiated. Repression may occur through muscle-specific E-box occupancy by homodimers. May also negatively regulate bHLH-mediated transcription through an N-terminal repressor domain. Serves as a key regulator of acinar cell function, stability, and identity. Also required for normal organelle localization in exocrine cells and for mitochondrial calcium ion transport. May function as a unique regulator of gene expression in several different embryonic and postnatal cell lineages. Binds to the E-box consensus sequence 5'-CANNTG-3'. The polypeptide is Class A basic helix-loop-helix protein 15 (BHLHA15) (Homo sapiens (Human)).